Here is a 374-residue protein sequence, read N- to C-terminus: DNA integrity scanning protein DisA (374 aa).

Positions 20 to 158 (DGLMRASLSA…DGQRRVLEDS (139 aa)) constitute a DAC domain. ATP-binding positions include Gly87, Leu105, and 118 to 122 (TRHRT).

This sequence belongs to the DisA family. In terms of assembly, homooctamer. Interacts with RadA. It depends on Mg(2+) as a cofactor.

It catalyses the reaction 2 ATP = 3',3'-c-di-AMP + 2 diphosphate. Its activity is regulated as follows. Diadenylate cyclase activity is inhibited by the interaction with RadA. Its function is as follows. Participates in a DNA-damage check-point that is active prior to asymmetric division when DNA is damaged. DisA forms globular foci that rapidly scan along the chromosomes during sporulation, searching for lesions. When a lesion is present, DisA pauses at the lesion site. This triggers a cellular response that culminates in a temporary block in sporulation initiation. Also has diadenylate cyclase activity, catalyzing the condensation of 2 ATP molecules into cyclic di-AMP (c-di-AMP). c-di-AMP acts as a signaling molecule that couples DNA integrity with progression of sporulation. The rise in c-di-AMP level generated by DisA while scanning the chromosome, operates as a positive signal that advances sporulation; upon encountering a lesion, the DisA focus arrests at the damaged site and halts c-di-AMP synthesis. The sequence is that of DNA integrity scanning protein DisA from Streptomyces coelicolor (strain ATCC BAA-471 / A3(2) / M145).